A 221-amino-acid chain; its full sequence is Immediate early response gene 2 protein (221 aa).

Met1 is modified (N-acetylmethionine). A disordered region spans residues 54–156 (THQPEFPPSR…EGEATSEVSN (103 aa)). Residues 64-77 (RALDPRLHPPREPE) show a composition bias toward basic and acidic residues. Low complexity predominate over residues 125 to 136 (SDLSDGSDAGLV).

Belongs to the IER family.

The protein resides in the cytoplasm. It is found in the nucleus. DNA-binding protein that seems to act as a transcription factor. Involved in the regulation of neuronal differentiation, acts upon JNK-signaling pathway activation and plays a role in neurite outgrowth in hippocampal cells. May mediate with FIBP FGF-signaling in the establishment of laterality in the embryo. Promotes cell motility, seems to stimulate tumor metastasis. This is Immediate early response gene 2 protein (Ier2) from Rattus norvegicus (Rat).